We begin with the raw amino-acid sequence, 233 residues long: Small ribosomal subunit protein uS2 (233 aa).

This sequence belongs to the universal ribosomal protein uS2 family.

The protein is Small ribosomal subunit protein uS2 of Prochlorococcus marinus (strain MIT 9312).